The chain runs to 37 residues: Esculentin-2JDb (37 aa).

The cysteines at positions 31 and 37 are disulfide-linked.

As to expression, expressed by the skin glands.

It localises to the secreted. Functionally, has antibacterial activity against E.coli and S.aureus strains. This Odorrana jingdongensis (Jingdong frog) protein is Esculentin-2JDb.